The primary structure comprises 66 residues: U8-myrmicitoxin-Tb1a (66 aa).

The signal sequence occupies residues 1–26 (MKLSFLSLAFAVIFVMAIMYAPQVEA). A propeptide spanning residues 27–50 (KASADADADADAAASADALAKASA) is cleaved from the precursor.

Expressed by the venom gland.

It localises to the secreted. In vivo, this neurotoxin paralyzes about 50% of blowflies (L.caesar) one hour after intrathoracic injection, when tested at high doses (54 nmol/g). The protein is U8-myrmicitoxin-Tb1a of Tetramorium bicarinatum (Tramp ant).